The chain runs to 88 residues: Small ribosomal subunit protein uS15 (88 aa).

This sequence belongs to the universal ribosomal protein uS15 family. As to quaternary structure, part of the 30S ribosomal subunit. Forms a bridge to the 50S subunit in the 70S ribosome, contacting the 23S rRNA.

In terms of biological role, one of the primary rRNA binding proteins, it binds directly to 16S rRNA where it helps nucleate assembly of the platform of the 30S subunit by binding and bridging several RNA helices of the 16S rRNA. Forms an intersubunit bridge (bridge B4) with the 23S rRNA of the 50S subunit in the ribosome. The sequence is that of Small ribosomal subunit protein uS15 from Geobacter sp. (strain M21).